Here is a 177-residue protein sequence, read N- to C-terminus: MVISMKSEKPLVGIIMGSDSDLPVMKEAARILEEFGVPYEITIISAHRTPERAYEYAKKAEERGIEVIIAGAGGAAHLPGIIASLTVLPVIGVPIKSKALNGLDSLLSIVQMPSGIPVATVAIDNAKNAALLALRILGIKYPEIKEKLRRYMKDMKRKVEEKAKRLEEMGWERYLSE.

Substrate contacts are provided by S18, D21, and R48.

Belongs to the AIR carboxylase family. Class I subfamily.

The enzyme catalyses 5-carboxyamino-1-(5-phospho-D-ribosyl)imidazole + H(+) = 5-amino-1-(5-phospho-D-ribosyl)imidazole-4-carboxylate. Its pathway is purine metabolism; IMP biosynthesis via de novo pathway; 5-amino-1-(5-phospho-D-ribosyl)imidazole-4-carboxylate from 5-amino-1-(5-phospho-D-ribosyl)imidazole (N5-CAIR route): step 2/2. In terms of biological role, catalyzes the conversion of N5-carboxyaminoimidazole ribonucleotide (N5-CAIR) to 4-carboxy-5-aminoimidazole ribonucleotide (CAIR). This is N5-carboxyaminoimidazole ribonucleotide mutase from Pyrococcus horikoshii (strain ATCC 700860 / DSM 12428 / JCM 9974 / NBRC 100139 / OT-3).